We begin with the raw amino-acid sequence, 450 residues long: Sensor histidine kinase EnvZ (450 aa).

The Cytoplasmic portion of the chain corresponds to 1 to 15; the sequence is MRRMRFSPRSSFART. A helical transmembrane segment spans residues 16–35; sequence LLLIVTLLFVSLVTTYLVVL. Over 36 to 158 the chain is Periplasmic; the sequence is NFAILPSLQQ…LTEIHQGDFS (123 aa). A helical membrane pass occupies residues 159-179; the sequence is PLFRYTLAIMLLAIGGAWLFI. Positions 180-232 constitute an HAMP domain; that stretch reads RIQNRPLVDLEHAALQVGKGIIPPPLREYGASEVRSVTRAFNHMAAGVKQLAD. The Cytoplasmic segment spans residues 180–450; the sequence is RIQNRPLVDL…ARVQGTTKEA (271 aa). The interval 223-289 is cytoplasmic dimerization domain (CDD), when dimerized forms osmosensitive core; the sequence is MAAGVKQLAD…IIEQFIDYLR (67 aa). The Histidine kinase domain maps to 240–440; it reads GVSHDLRTPL…SIRAWLPVPV (201 aa). ATP is bound by residues His-243, 347 to 351, Asp-373, 392 to 393, and 402 to 406; these read NAARY, RG, and TGLGL. Residue His-243 is modified to Phosphohistidine; by autocatalysis.

Homodimer. Post-translationally, autophosphorylated.

The protein localises to the cell inner membrane. It carries out the reaction ATP + protein L-histidine = ADP + protein N-phospho-L-histidine.. Member of the two-component regulatory system EnvZ/OmpR involved in regulating expression of the outer membrane porins OmpC and OmpF as well as other genes. Unlike E.coli or S.typhimurium both porins are expressed constitutively. Involved in regulation of the biosynthesis of Vi polysaccharide, a capsular antigen thought to be involved in the virulence of S.typhi. Vi antigen is synthesized at low NaCl concentrations (under 0.4 M). EnvZ functions as a membrane-associated protein kinase that phosphorylates OmpR in response to environmental signals. The chain is Sensor histidine kinase EnvZ (envZ) from Salmonella typhi.